A 349-amino-acid polypeptide reads, in one-letter code: Achromobactin transport system permease protein CbrC (349 aa).

10 helical membrane passes run 32–52, 82–102, 111–131, 138–158, 168–188, 190–210, 216–236, 263–283, 290–310, and 325–345; these read LALLLVLAVMVASLGVGKLML, VLAALVGGALAVSGLILQAMI, ILGITSGASAAAVFYLSFLAA, LPLAAMIGAATAALAVYWLAW, VLTGVGVSALLMAATTFMLVF, PLTTTLSAYVWLTGSVYGASW, LGGWLLLIAPWLVLLARQVRV, VALAGAAIAWGGAMAFVGLIA, LVAPGFAGQAAMAFLSGAGLV, and DLPAGIFVSALGAPFFLYLLI.

The protein belongs to the binding-protein-dependent transport system permease family. FecCD subfamily.

The protein localises to the cell inner membrane. Functionally, part of the binding-protein-dependent transport system CbrABCD for uptake of the siderophore achromobactin. Probably responsible for the translocation of the substrate across the membrane. The protein is Achromobactin transport system permease protein CbrC (cbrC) of Dickeya dadantii (strain 3937) (Erwinia chrysanthemi (strain 3937)).